Reading from the N-terminus, the 495-residue chain is Glycerol kinase (495 aa).

Residue threonine 13 participates in ADP binding. ATP contacts are provided by threonine 13, threonine 14, and serine 15. Threonine 13 contacts sn-glycerol 3-phosphate. Arginine 17 lines the ADP pocket. Sn-glycerol 3-phosphate-binding residues include arginine 83, glutamate 84, tyrosine 135, and aspartate 244. Glycerol contacts are provided by arginine 83, glutamate 84, tyrosine 135, aspartate 244, and glutamine 245. Threonine 266 and glycine 309 together coordinate ADP. ATP is bound by residues threonine 266, glycine 309, glutamine 313, and glycine 410. Positions 410 and 414 each coordinate ADP.

The protein belongs to the FGGY kinase family.

The enzyme catalyses glycerol + ATP = sn-glycerol 3-phosphate + ADP + H(+). The protein operates within polyol metabolism; glycerol degradation via glycerol kinase pathway; sn-glycerol 3-phosphate from glycerol: step 1/1. Its activity is regulated as follows. Inhibited by fructose 1,6-bisphosphate (FBP). Functionally, key enzyme in the regulation of glycerol uptake and metabolism. Catalyzes the phosphorylation of glycerol to yield sn-glycerol 3-phosphate. The sequence is that of Glycerol kinase from Shewanella sediminis (strain HAW-EB3).